Reading from the N-terminus, the 189-residue chain is Insecticyanin-A (189 aa).

2 cysteine pairs are disulfide-bonded: Cys9/Cys119 and Cys43/Cys175.

The protein belongs to the calycin superfamily. Lipocalin family. Homotetramer. In terms of tissue distribution, synthesized only in the caterpillars, apparently by the epidermis and secreted into the hemolymph. The protein is passed over from the larval hemolymph to that of pupae and adults and is sequestered in the eggs.

It is found in the secreted. In terms of biological role, this protein binds a chromophore: biliverdin IX, isomer gamma. Mixed with lipoprotein-bound carotenes, this blue protein provides hornworms with their green cryptic coloration which serves a camouflage. This chain is Insecticyanin-A (INSA), found in Manduca sexta (Tobacco hawkmoth).